The chain runs to 94 residues: ATP synthase subunit c (94 aa).

2 helical membrane-spanning segments follow: residues 15–35 and 61–81; these read VSVG…WGLI and GGLM…FIFA.

Belongs to the ATPase C chain family. F-type ATPases have 2 components, F(1) - the catalytic core - and F(0) - the membrane proton channel. F(1) has five subunits: alpha(3), beta(3), gamma(1), delta(1), epsilon(1). F(0) has three main subunits: a(1), b(2) and c(10-14). The alpha and beta chains form an alternating ring which encloses part of the gamma chain. F(1) is attached to F(0) by a central stalk formed by the gamma and epsilon chains, while a peripheral stalk is formed by the delta and b chains.

It localises to the cell inner membrane. Its function is as follows. F(1)F(0) ATP synthase produces ATP from ADP in the presence of a proton or sodium gradient. F-type ATPases consist of two structural domains, F(1) containing the extramembraneous catalytic core and F(0) containing the membrane proton channel, linked together by a central stalk and a peripheral stalk. During catalysis, ATP synthesis in the catalytic domain of F(1) is coupled via a rotary mechanism of the central stalk subunits to proton translocation. Functionally, key component of the F(0) channel; it plays a direct role in translocation across the membrane. A homomeric c-ring of between 10-14 subunits forms the central stalk rotor element with the F(1) delta and epsilon subunits. This is ATP synthase subunit c from Nitrosococcus oceani (strain ATCC 19707 / BCRC 17464 / JCM 30415 / NCIMB 11848 / C-107).